The primary structure comprises 369 residues: Forkhead box protein I2-A (369 aa).

Residues 124-218 (RPPYSYSSLI…DNGNFRRKRK (95 aa)) constitute a DNA-binding region (fork-head). The segment at 215-252 (RKRKRKSESVGAGFDEDSNEDKKPLALKSLGSDSPQGA) is disordered.

In terms of tissue distribution, localized to the animal hemisphere of early cleavage stage embryos. Zygotic expression is restricted to the dorsal part of the epibranchial placodes of the head within a region located near the tip of the first, second and third visceral pouch.

The protein localises to the nucleus. Possible transcriptional activator. In Xenopus laevis (African clawed frog), this protein is Forkhead box protein I2-A (foxi2-a).